A 240-amino-acid polypeptide reads, in one-letter code: Probable septum site-determining protein MinC (240 aa).

This sequence belongs to the MinC family. In terms of assembly, interacts with MinD and FtsZ.

Cell division inhibitor that blocks the formation of polar Z ring septums. Rapidly oscillates between the poles of the cell to destabilize FtsZ filaments that have formed before they mature into polar Z rings. Prevents FtsZ polymerization. This is Probable septum site-determining protein MinC from Acinetobacter baumannii (strain ATCC 17978 / DSM 105126 / CIP 53.77 / LMG 1025 / NCDC KC755 / 5377).